The chain runs to 223 residues: Endonuclease V (223 aa).

Asp35 and Asp103 together coordinate Mg(2+).

Belongs to the endonuclease V family. Requires Mg(2+) as cofactor.

Its subcellular location is the cytoplasm. The enzyme catalyses Endonucleolytic cleavage at apurinic or apyrimidinic sites to products with a 5'-phosphate.. Functionally, DNA repair enzyme involved in the repair of deaminated bases. Selectively cleaves double-stranded DNA at the second phosphodiester bond 3' to a deoxyinosine leaving behind the intact lesion on the nicked DNA. This chain is Endonuclease V, found in Cronobacter sakazakii (strain ATCC BAA-894) (Enterobacter sakazakii).